The following is a 168-amino-acid chain: Large ribosomal subunit protein uL10 (168 aa).

It belongs to the universal ribosomal protein uL10 family. As to quaternary structure, part of the ribosomal stalk of the 50S ribosomal subunit. The N-terminus interacts with L11 and the large rRNA to form the base of the stalk. The C-terminus forms an elongated spine to which L12 dimers bind in a sequential fashion forming a multimeric L10(L12)X complex.

Its function is as follows. Forms part of the ribosomal stalk, playing a central role in the interaction of the ribosome with GTP-bound translation factors. In Levilactobacillus brevis (strain ATCC 367 / BCRC 12310 / CIP 105137 / JCM 1170 / LMG 11437 / NCIMB 947 / NCTC 947) (Lactobacillus brevis), this protein is Large ribosomal subunit protein uL10.